The sequence spans 344 residues: Protein-glutamate methylesterase/protein-glutamine glutaminase 1 (344 aa).

The Response regulatory domain maps to 5-122; that stretch reads RVLVVDDSAT…GTQEALAEIV (118 aa). At Asp-56 the chain carries 4-aspartylphosphate. The 193-residue stretch at 151–343 folds into the CheB-type methylesterase domain; it reads FMPSGDIVAI…QSILDLASAR (193 aa). Residues Ser-163, His-189, and Asp-285 contribute to the active site.

Belongs to the CheB family. In terms of processing, phosphorylated by CheA. Phosphorylation of the N-terminal regulatory domain activates the methylesterase activity.

The protein localises to the cytoplasm. The catalysed reaction is [protein]-L-glutamate 5-O-methyl ester + H2O = L-glutamyl-[protein] + methanol + H(+). The enzyme catalyses L-glutaminyl-[protein] + H2O = L-glutamyl-[protein] + NH4(+). In terms of biological role, involved in chemotaxis. Part of a chemotaxis signal transduction system that modulates chemotaxis in response to various stimuli. Catalyzes the demethylation of specific methylglutamate residues introduced into the chemoreceptors (methyl-accepting chemotaxis proteins or MCP) by CheR. Also mediates the irreversible deamidation of specific glutamine residues to glutamic acid. In Caulobacter vibrioides (strain ATCC 19089 / CIP 103742 / CB 15) (Caulobacter crescentus), this protein is Protein-glutamate methylesterase/protein-glutamine glutaminase 1.